Reading from the N-terminus, the 270-residue chain is Ribonuclease HII (270 aa).

Residues 84-270 (RYIAGVDEVG…HRNSFLTKLL (187 aa)) form the RNase H type-2 domain. Positions 90, 91, and 186 each coordinate a divalent metal cation.

Belongs to the RNase HII family. Requires Mn(2+) as cofactor. It depends on Mg(2+) as a cofactor.

It localises to the cytoplasm. The catalysed reaction is Endonucleolytic cleavage to 5'-phosphomonoester.. Endonuclease that specifically degrades the RNA of RNA-DNA hybrids. The protein is Ribonuclease HII of Clostridium beijerinckii (strain ATCC 51743 / NCIMB 8052) (Clostridium acetobutylicum).